A 121-amino-acid chain; its full sequence is Large ribosomal subunit protein uL22 (121 aa).

It belongs to the universal ribosomal protein uL22 family. As to quaternary structure, part of the 50S ribosomal subunit.

Its function is as follows. This protein binds specifically to 23S rRNA; its binding is stimulated by other ribosomal proteins, e.g. L4, L17, and L20. It is important during the early stages of 50S assembly. It makes multiple contacts with different domains of the 23S rRNA in the assembled 50S subunit and ribosome. The globular domain of the protein is located near the polypeptide exit tunnel on the outside of the subunit, while an extended beta-hairpin is found that lines the wall of the exit tunnel in the center of the 70S ribosome. This Micrococcus luteus (strain ATCC 4698 / DSM 20030 / JCM 1464 / CCM 169 / CCUG 5858 / IAM 1056 / NBRC 3333 / NCIMB 9278 / NCTC 2665 / VKM Ac-2230) (Micrococcus lysodeikticus) protein is Large ribosomal subunit protein uL22.